We begin with the raw amino-acid sequence, 759 residues long: Protein MEI2-like 3 (759 aa).

2 RRM domains span residues 166 to 239 (RTLF…FSIP) and 251 to 324 (GTLV…HSRP).

In terms of biological role, probable RNA-binding protein that plays a role in meiosis and vegetative growth. This chain is Protein MEI2-like 3 (ML3), found in Arabidopsis thaliana (Mouse-ear cress).